The sequence spans 287 residues: Inositol-1-monophosphatase (287 aa).

Glutamate 79, aspartate 96, leucine 98, and aspartate 99 together coordinate Mg(2+). Glutamate 79 contributes to the substrate binding site. Residues 98-101 (LDGT), arginine 195, and aspartate 224 each bind substrate. Aspartate 224 lines the Mg(2+) pocket.

This sequence belongs to the inositol monophosphatase superfamily. It depends on Mg(2+) as a cofactor.

The enzyme catalyses a myo-inositol phosphate + H2O = myo-inositol + phosphate. The chain is Inositol-1-monophosphatase (suhB) from Synechocystis sp. (strain ATCC 27184 / PCC 6803 / Kazusa).